The chain runs to 546 residues: Chaperonin GroEL 2 (546 aa).

ATP contacts are provided by residues 30-33 (TLGP), K51, 87-91 (DGTTT), G415, 479-481 (NAA), and D495. The segment at 524-546 (APKDAPPAQPAGVPGAGGTGFDF) is disordered. The segment covering 537-546 (PGAGGTGFDF) has biased composition (gly residues).

The protein belongs to the chaperonin (HSP60) family. Forms a cylinder of 14 subunits composed of two heptameric rings stacked back-to-back. Interacts with the co-chaperonin GroES.

It is found in the cytoplasm. The catalysed reaction is ATP + H2O + a folded polypeptide = ADP + phosphate + an unfolded polypeptide.. Its function is as follows. Together with its co-chaperonin GroES, plays an essential role in assisting protein folding. The GroEL-GroES system forms a nano-cage that allows encapsulation of the non-native substrate proteins and provides a physical environment optimized to promote and accelerate protein folding. This Burkholderia thailandensis (strain ATCC 700388 / DSM 13276 / CCUG 48851 / CIP 106301 / E264) protein is Chaperonin GroEL 2.